The primary structure comprises 324 residues: MSERNAASARTVACLLGPTASGKTAAALALAARRPIEIVSVDSALVYRGMDIGTAKPTRDERAAVPHHLIDIVDPADAYSAAEFRADALRLVAQIAARGRTPLLAGGTMLYYRALTQGLNDLPAADPDVRATLDADAARDGWPALHARLAGIDPATAARLAPNDSQRIQRALEVYLLTGQPMSALLAAPPRDDDAAAGLRFVPVALEPSERAVLHARIAARFDAMLEAGFIDEVERLRRRDDLHLGLPSMRCVGYRQAWEYLDGCTDYRTMRDKGIFATRQLCKRQLTWLRAMPERIVVDCCAPDATVRAVDALERVLDGRAPA.

An ATP-binding site is contributed by 17-24 (GPTASGKT). 19 to 24 (TASGKT) is a binding site for substrate. Interaction with substrate tRNA regions lie at residues 42 to 45 (DSAL), 166 to 170 (QRIQR), and 251 to 256 (RCVGYR).

The protein belongs to the IPP transferase family. In terms of assembly, monomer. Mg(2+) is required as a cofactor.

It carries out the reaction adenosine(37) in tRNA + dimethylallyl diphosphate = N(6)-dimethylallyladenosine(37) in tRNA + diphosphate. Its function is as follows. Catalyzes the transfer of a dimethylallyl group onto the adenine at position 37 in tRNAs that read codons beginning with uridine, leading to the formation of N6-(dimethylallyl)adenosine (i(6)A). The protein is tRNA dimethylallyltransferase of Burkholderia pseudomallei (strain 1106a).